Here is a 104-residue protein sequence, read N- to C-terminus: Astakine (104 aa).

An N-terminal signal peptide occupies residues 1-22 (MKMRGVSVGVLVVAMMSGLAMA). 5 cysteine pairs are disulfide-bonded: C25–C38, C32–C50, C37–C76, C60–C84, and C78–C91.

It belongs to the AVIT (prokineticin) family.

The protein localises to the secreted. Functionally, cytokine directly involved in hematopoiesis. This is Astakine from Pacifastacus leniusculus (Signal crayfish).